Reading from the N-terminus, the 177-residue chain is Adenylate kinase (177 aa).

13–18 (GCGKGT) serves as a coordination point for ATP. The interval 33–62 (SSGDIIREEMKKSSKEATVIREMVNSGRLA) is NMP. AMP is bound by residues serine 34, arginine 39, 60–62 (RLA), 85–88 (GYPR), and glutamine 92. The interval 119-127 (GRNEGRDDD) is LID. Arginine 120 provides a ligand contact to ATP. AMP-binding residues include arginine 124 and arginine 135.

The protein belongs to the adenylate kinase family. Monomer.

The protein resides in the cytoplasm. The enzyme catalyses AMP + ATP = 2 ADP. Functionally, catalyzes the reversible transfer of the terminal phosphate group between ATP and AMP. Plays an important role in cellular energy homeostasis and in adenine nucleotide metabolism. This chain is Adenylate kinase, found in Encephalitozoon cuniculi (strain GB-M1) (Microsporidian parasite).